A 2411-amino-acid polypeptide reads, in one-letter code: Polyprotein P1234 (2411 aa).

Positions 30 to 257 (EAVQTTPNDH…ESRKLLQSWH (228 aa)) constitute an Alphavirus-like MT domain. The interval 242–261 (GSTLYTESRKLLQSWHLPST) is nsP1 membrane-binding. S-palmitoyl cysteine; by host attachment occurs at residues C415 and C417. A (+)RNA virus helicase ATP-binding domain is found at 688-840 (ELVNPPFHEF…HDICSEVFHK (153 aa)). An a ribonucleoside 5'-triphosphate-binding site is contributed by 719–726 (GVPGSGKS). The (+)RNA virus helicase C-terminal domain occupies 841–989 (SISRRCTQDI…IAEWEAEHQG (149 aa)). A Peptidase C9 domain is found at 1002–1325 (NTFMNKVNVC…RKANSIFQNT (324 aa)). The interval 1003 to 1022 (TFMNKVNVCWAKTLTPVLET) is nucleolus localization signal. Catalysis depends on C1011, which acts as the For cysteine protease nsP2 activity. The Nuclear export signal motif lies at 1056–1065 (TKMYGFDLDT). The active-site For cysteine protease nsP2 activity is the H1081. The Nuclear localization signal signature appears at 1180-1184 (PNKKI). Positions 1332 to 1491 (APAYRVKRGD…KIKEAIDHRT (160 aa)) constitute a Macro domain. Residues D1341, N1355, G1363, G1443, I1444, and Y1445 each contribute to the ADP-D-ribose site. C1593, C1595, C1618, and C1636 together coordinate Zn(2+). The segment at 1681–1720 (DSSIGSLPVGDTRPIPAPRTIFRPVPAPRAPVLRTTPPPK) is disordered. 2 short sequence motifs (FGDF; binding to host G3BP1) span residues 1760-1763 (FGDF) and 1778-1781 (FGDF). In terms of domain architecture, RdRp catalytic spans 2165–2280 (DHVLETDIAS…HGIISDKLMA (116 aa)).

As to quaternary structure, interacts with non-structural protein 3. Interacts with RNA-directed RNA polymerase nsP4. Interacts with protease nsP2. interacts with itself. Interacts with mRNA-capping enzyme nsP1. Interacts with host DDX1. Interacts with host DDX3. Interacts (via C-terminus) with host G3BP1; this interaction inhibits the formation of host stress granules on viral mRNAs and the nsp3-G3BP1 complexes bind viral RNAs and probably orchestrate the assembly of viral replication complexes. Interacts (via C-terminus) with host G3BP2; this interaction inhibits the formation of host stress granules on viral mRNAs and the nsp3-G3BP2 complexes bind viral RNAs and probably orchestrate the assembly of viral replication complexes. In terms of assembly, interacts with mRNA-capping enzyme nsP1. Interacts with protease nsP2. interacts with itself. As to quaternary structure, interacts with RNA-directed RNA polymerase nsP4. Interacts with mRNA-capping enzyme nsP1. Interacts with KPNA1/karyopherin-alpha1; this interaction probably allows the active transport of protease nsP2 into the host nucleus. Mg(2+) is required as a cofactor. Requires Mn(2+) as cofactor. Post-translationally, specific enzymatic cleavages in vivo yield mature proteins. The processing of the polyprotein is temporally regulated. In early stages (1.7 hpi), P1234 is first cleaved in trans through its nsP2 protease activity, releasing P123' and nsP4, which associate to form the early replication complex. At the same time, P1234 is also cut at the nsP1/nsP2 site early in infection but with lower efficiency. After replication of the viral minus-strand RNAs (4 hpi), the polyproteins are cut at the nsP1/nsP2 and nsP2/nsP3 sites very efficiently, preventing accumulation of P123' and P1234 and allowing the formation of the late replication complex. NsP3'/nsP4 site is not cleaved anymore and P34 is produced rather than nsP4. Specific enzymatic cleavages in vivo yield mature proteins. The processing of the polyprotein is temporally regulated. In early stages (1.7 hpi), P123 is cleaved at the nsP1/nsP2 site with low efficiency. After replication of the viral minus-strand RNAs (4 hpi), the polyproteins are cut at the nsP1/nsP2 and nsP2/nsP3 sites very efficiently, preventing accumulation of P123 and allowing the formation of the late replication complex. In terms of processing, specific enzymatic cleavages in vivo yield mature proteins. The processing of the polyprotein is temporally regulated. In early stages (1.7 hpi), P123' is cleaved at the nsP1/nsP2 site with low efficiency. After replication of the viral minus-strand RNAs (4 hpi), the polyproteins are cut at the nsP1/nsP2 and nsP2/nsP3 sites very efficiently, preventing accumulation of P123' and allowing the formation of the late replication complex. Post-translationally, palmitoylated by host palmitoyltransferases ZDHHC2 and ZDHHC19. Phosphorylated by host on serines and threonines. In terms of processing, ubiquitinated; targets the protein for rapid degradation via the ubiquitin system. Nsp4 is present in extremely low quantities due to low frequency of translation through the amber stop-codon and the degradation by the ubiquitin pathway.

It is found in the host cytoplasmic vesicle membrane. It localises to the host cell membrane. The protein localises to the host cell projection. Its subcellular location is the host filopodium. The protein resides in the host nucleus. It is found in the host cytoplasm. The catalysed reaction is GTP + S-adenosyl-L-methionine = N(7)-methyl-GTP + S-adenosyl-L-homocysteine. It carries out the reaction N(7)-methyl-GTP + L-histidyl-[protein] = N(tele)-(N(7)-methylguanosine 5'-phospho)-L-histidyl-[protein] + diphosphate. It catalyses the reaction N(tele)-(N(7)-methylguanosine 5'-phospho)-L-histidyl-[protein] + a 5'-end diphospho-(purine-ribonucleoside) in mRNA + H(+) = a 5'-end (N(7)-methyl 5'-triphosphoguanosine)-(purine-ribonucleoside) in mRNA + L-histidyl-[protein]. The enzyme catalyses a 5'-end triphospho-ribonucleoside in mRNA + H2O = a 5'-end diphospho-ribonucleoside in mRNA + phosphate + H(+). The catalysed reaction is a ribonucleoside 5'-triphosphate + H2O = a ribonucleoside 5'-diphosphate + phosphate + H(+). It carries out the reaction ATP + H2O = ADP + phosphate + H(+). It catalyses the reaction RNA(n) + a ribonucleoside 5'-triphosphate = RNA(n+1) + diphosphate. The enzyme catalyses RNA(n) + ATP = RNA(n)-3'-adenine ribonucleotide + diphosphate. The catalysed reaction is 4-O-(ADP-D-ribosyl)-L-aspartyl-[protein] + H2O = L-aspartyl-[protein] + ADP-D-ribose + H(+). It carries out the reaction 5-O-(ADP-D-ribosyl)-L-glutamyl-[protein] + H2O = L-glutamyl-[protein] + ADP-D-ribose + H(+). It catalyses the reaction ADP-alpha-D-ribose 1''-phosphate + H2O = ADP-D-ribose + phosphate. In terms of biological role, inactive precursor of the viral replicase, which is activated by cleavages carried out by the viral protease nsP2. Its function is as follows. The early replication complex formed by the polyprotein P123 and nsP4 synthesizes minus-strand RNAs. As soon P123 is cleaved into mature proteins, the plus-strand RNAs synthesis begins. Functionally, the early replication complex formed by the polyprotein P123' and nsP4 synthesizes minus-strand RNAs. Polyprotein P123' is a short-lived polyprotein that accumulates during early stage of infection. As soon P123' is cleaved into mature proteins, the plus-strand RNAs synthesis begins. Cytoplasmic capping enzyme that catalyzes two virus-specific reactions: methyltransferase and nsP1 guanylyltransferase. mRNA-capping is necessary since all viral RNAs are synthesized in the cytoplasm, and host capping enzymes are restricted to the nucleus. The enzymatic reaction involves a covalent link between 7-methyl-GMP and nsP1, whereas eukaryotic capping enzymes form a covalent complex only with GMP. nsP1 capping consists in the following reactions: GTP is first methylated into 7-methyl-GMP and then is covalently linked to nsP1 to form the m7GMp-nsP1 complex from which 7-methyl-GMP complex is transferred to the mRNA to create the cap structure. NsP1 is needed for the initiation of the minus-strand RNAs synthesis. Probably serves as a membrane anchor for the replication complex composed of nsP1-nsP4. Palmitoylated nsP1 is remodeling host cell cytoskeleton, and induces filopodium-like structure formation at the surface of the host cell. In terms of biological role, multifunctional protein whose N-terminus is part of the RNA polymerase complex and displays NTPase, RNA triphosphatase and helicase activities. NTPase and RNA triphosphatase are involved in viral RNA capping and helicase keeps a check on the dsRNA replication intermediates. The C-terminus harbors a protease that specifically cleaves the polyproteins and releases the mature proteins. Required for the shutoff of minus-strand RNAs synthesis. Specifically inhibits the host IFN response by promoting the nuclear export of host STAT1. Also inhibits host transcription by inducing rapid proteasome-dependent degradation of POLR2A, a catalytic subunit of the RNAPII complex. The resulting inhibition of cellular protein synthesis serves to ensure maximal viral gene expression and to evade host immune response. Its function is as follows. Seems to be essential for minus-strand RNAs and subgenomic 26S mRNAs synthesis. Displays mono-ADP-ribosylhydrolase activity. ADP-ribosylation is a post-translational modification that controls various processes of the host cell and the virus probably needs to revert it for optimal viral replication. Binds proteins of FXR family and sequesters them into the viral RNA replication complexes thereby inhibiting the formation of host stress granules on viral mRNAs. The nsp3-FXR complexes bind viral RNAs and probably orchestrate the assembly of viral replication complexes, thanks to the ability of FXR family members to self-assemble and bind DNA. Functionally, seems to be essential for minus-strand RNAs and subgenomic 26S mRNAs synthesis. Displays mono-ADP-ribosylhydrolase activity. ADP-ribosylation is a post-translantional modification that controls various processes of the host cell and the virus probably needs to revert it for optimal viral replication. Binds proteins of G3BP family and sequesters them into the viral RNA replication complexes thereby inhibiting the formation of host stress granules on viral mRNAs. The nsp3'-G3BP complexes bind viral RNAs and probably orchestrate the assembly of viral replication complexes, thanks to the ability of G3BP family members to self-assemble and bind DNA. RNA dependent RNA polymerase. Replicates genomic and antigenomic RNA by recognizing replications specific signals. The early replication complex formed by the polyprotein P123 and nsP4 synthesizes minus-strand RNAs. The late replication complex composed of fully processed nsP1-nsP4 is responsible for the production of genomic and subgenomic plus-strand RNAs. The core catalytic domain of nsP4 also possesses terminal adenylyltransferase (TATase) activity that is probably involved in maintenance and repair of the poly(A) tail, an element required for replication of the viral genome. The protein is Polyprotein P1234 of Barmah forest virus (BFV).